A 2496-amino-acid polypeptide reads, in one-letter code: Hornerin (2496 aa).

Residues Met1 to Leu81 form an S-100-like region. 2 EF-hand domains span residues Asp13–Pro48 and Asp49–Ala84. Ca(2+) is bound by residues Met27, Glu32, Asp62, Asp64, Asn66, Lys68, and Glu73. A s (spacer) region spans residues Thr82–Gly98. Positions Ser97–Gly2496 are disordered. The stretch at Ser99–Lys145 is one 1; truncated repeat. Basic and acidic residues predominate over residues Gln107–Lys123. Residues Gly124–Asp134 show a composition bias toward polar residues. Residues Asn144–Lys153 show a composition bias toward basic residues. 27 consecutive repeat copies span residues Ser146–His231, Gly232–Ser321, Ser326–Tyr400, Gly401–Gly491, Gln492–Tyr577, Gly578–Arg668, His669–Cys748, Gly749–Gly839, Gln840–Tyr926, Gly927–Arg1017, His1018–Cys1097, Gly1098–Gly1188, Gln1189–Tyr1274, Gly1275–Arg1365, His1366–Cys1445, Gly1446–Gly1536, Gln1537–Tyr1622, Gly1623–Arg1713, His1714–Cys1793, Gly1794–Gly1884, Gln1885–Tyr1970, Gly1971–Arg2061, His2062–Cys2141, Gly2142–Arg2232, His2233–Tyr2312, Gly2313–Arg2403, and Gln2410–Gly2496. Low complexity-rich tracts occupy residues Ser183–Pro194, Ser200–Ser246, and Arg270–Pro286. 2 stretches are compositionally biased toward polar residues: residues Arg294 to Gly319 and Ser326 to Ser355. 3 stretches are compositionally biased toward low complexity: residues Val362–Gly379, Ser394–Ser415, and Ser423–Gly448. Gly residues predominate over residues Ser449–Gln464. Low complexity predominate over residues Gly465–Gly565. A phosphoserine mark is found at Ser506 and Ser508. Residues Ser566 to Arg576 are compositionally biased toward gly residues. Low complexity-rich tracts occupy residues Tyr577–Thr593 and Ser600–Gly625. The span at Ser626–Gln641 shows a compositional bias: gly residues. Low complexity-rich tracts occupy residues Gly642–Gly670 and Ser679–Ser713. An Omega-N-methylarginine modification is found at Arg646. Phosphoserine is present on Ser716. Residues Gly723–Gly736 are compositionally biased toward low complexity. Over residues Ser737–Arg747 the composition is skewed to gly residues. Composition is skewed to low complexity over residues Cys748–Thr764, Ser771–Gly796, Gly804–Ala884, and Ser891–Gly914. Ser815 bears the Phosphoserine mark. Positions Ser915 to Arg925 are enriched in gly residues. Low complexity-rich tracts occupy residues Tyr926–Thr942 and Ser949–Gly974. Positions Ser975–Gln990 are enriched in gly residues. 3 stretches are compositionally biased toward low complexity: residues Gly991 to Gly1019, Ser1028 to Ser1062, and Gly1072 to Gly1085. The residue at position 995 (Arg995) is an Omega-N-methylarginine. The segment covering Ser1086 to Arg1096 has biased composition (gly residues). 3 stretches are compositionally biased toward low complexity: residues Cys1097–Thr1113, Ser1120–Gly1145, and Gly1153–Gly1262. The residue at position 1229 (Ser1229) is a Phosphoserine. Residues Ser1263–Arg1273 are compositionally biased toward gly residues. Over residues Thr1281 to Tyr1292 the composition is skewed to polar residues. The span at Gly1298–Gly1322 shows a compositional bias: low complexity. Positions Ser1323–Gln1338 are enriched in gly residues. Low complexity-rich tracts occupy residues Gly1339 to Gly1367, Ser1376 to Ser1410, and Gly1420 to Gly1433. The residue at position 1343 (Arg1343) is an Omega-N-methylarginine. Gly residues predominate over residues Ser1434–Arg1444. 3 stretches are compositionally biased toward low complexity: residues Cys1445–Thr1461, Ser1468–Gly1493, and Gly1501–Gly1610. Phosphoserine occurs at positions 1551 and 1553. A compositionally biased stretch (gly residues) spans Ser1611 to Arg1621. 2 stretches are compositionally biased toward low complexity: residues Tyr1622–Gly1631 and Ser1645–Gly1670. A Phosphoserine modification is found at Ser1650. The span at Ser1671–Gln1686 shows a compositional bias: gly residues. Composition is skewed to low complexity over residues Gly1687–Gly1715, Ser1724–Ser1758, and Gly1768–Gly1781. At Arg1691 the chain carries Omega-N-methylarginine. The span at Ser1782–Arg1792 shows a compositional bias: gly residues. A compositionally biased stretch (polar residues) spans Thr1800–Tyr1811. Low complexity-rich tracts occupy residues Ser1816–Gly1841 and Gly1849–Gly1958. The span at Ser1959 to Arg1969 shows a compositional bias: gly residues. Low complexity-rich tracts occupy residues Tyr1970–Thr1986 and Ser1993–Gly2018. Ser2011 is modified (phosphoserine). The segment covering Ser2019 to Gln2034 has biased composition (gly residues). Composition is skewed to low complexity over residues Gly2035 to Gly2063 and Ser2072 to Ser2106. Position 2039 is an omega-N-methylarginine (Arg2039). Ser2109 and Ser2124 each carry phosphoserine. Positions Gly2116–Gly2129 are enriched in low complexity. Over residues Ser2130–Arg2140 the composition is skewed to gly residues. 2 stretches are compositionally biased toward low complexity: residues Cys2141–Thr2157 and Ser2164–Gly2189. Residues Ser2190–Gln2205 are compositionally biased toward gly residues. Low complexity-rich tracts occupy residues Gly2206–Gly2234 and Ser2243–Gly2300. Arg2210 bears the Omega-N-methylarginine mark. Residues Ser2301–Arg2311 show a composition bias toward gly residues. Composition is skewed to low complexity over residues Tyr2312–Thr2328 and Ser2335–Gly2360. Ser2353 carries the post-translational modification Phosphoserine. Positions Ser2361 to Gln2376 are enriched in gly residues. 3 stretches are compositionally biased toward low complexity: residues Gly2377–Gly2405, Ser2414–Ser2448, and Gly2458–Gly2471. Arg2381 carries the omega-N-methylarginine modification. Residues Ser2472–Arg2482 show a composition bias toward gly residues.

This sequence belongs to the S100-fused protein family. The protein in the N-terminal section; belongs to the S-100 family. Processed during the process of epidermal differentiation. Post-translationally, forms covalent cross-links mediated by transglutaminase TGM3, between glutamine and the epsilon-amino group of lysine residues (in vitro). In terms of tissue distribution, embryonic skin. Highest level in the adult forestomach followed by the skin. Lower levels in the tongue, esophagus. Detected in the granular and cornified layers of the mature epidermis.

The protein localises to the cytoplasmic granule. Component of the epidermal cornified cell envelopes. The polypeptide is Hornerin (Hrnr) (Mus musculus (Mouse)).